The following is a 506-amino-acid chain: Parthenolide synthase (506 aa).

A helical transmembrane segment spans residues 10–30 (LFLPTLCTILISYIIIKYVLI). Asparagine 32, asparagine 63, asparagine 121, asparagine 168, and asparagine 175 each carry an N-linked (GlcNAc...) asparagine glycan. Residues 301-321 (LLLNVLLGAIDTTFTTIVWAM) traverse the membrane as a helical segment. Position 448 (cysteine 448) interacts with heme.

It belongs to the cytochrome P450 family.

The protein resides in the membrane. It catalyses the reaction (+)-costunolide + reduced [NADPH--hemoprotein reductase] + O2 = parthenolide + oxidized [NADPH--hemoprotein reductase] + H2O + H(+). It participates in secondary metabolite biosynthesis; terpenoid biosynthesis. Functionally, involved in the biosynthesis of germacrene-derived sesquiterpene lactones. Component of the parthenolide biosynthetic pathway; parthenolide and conjugates are promising anti-cancer drugs highly active against colon cancer cells. Catalyzes the conversion of costunolide to parthenolide. The sequence is that of Parthenolide synthase from Tanacetum parthenium (Feverfew).